Reading from the N-terminus, the 424-residue chain is Hemagglutinin-esterase (424 aa).

An N-terminal signal peptide occupies residues 1–16; it reads MFLLPRFVLVSCIIGS. Residues 7-127 form an esterase domain 1 region; the sequence is FVLVSCIIGS…SNDIWMQNKG (121 aa). Over 17 to 392 the chain is Virion surface; that stretch reads LGFDNPPTNV…PICVYDPLPI (376 aa). Serine 40 functions as the Nucleophile in the catalytic mechanism. The cysteines at positions 44 and 65 are disulfide-linked. 5 N-linked (GlcNAc...) asparagine; by host glycosylation sites follow: asparagine 54, asparagine 89, asparagine 153, asparagine 236, and asparagine 301. 3 disulfides stabilise this stretch: cysteine 113-cysteine 162, cysteine 197-cysteine 276, and cysteine 205-cysteine 249. A receptor binding region spans residues 128-266; that stretch reads LFYTQVYKNM…GNYLAISNEL (139 aa). The tract at residues 267 to 379 is esterase domain 2; it reads LLTVPTKAIC…RCPTAADINT (113 aa). Residues cysteine 307 and cysteine 312 are joined by a disulfide bond. Residue asparagine 316 is glycosylated (N-linked (GlcNAc...) asparagine; by host). Catalysis depends on charge relay system residues aspartate 326 and histidine 329. The cysteines at positions 347 and 371 are disulfide-linked. N-linked (GlcNAc...) asparagine; by host glycosylation occurs at asparagine 358. The helical transmembrane segment at 393–413 threads the bilayer; the sequence is ILLGILLGVAVIIIVVLLLYF. Residues 414-424 lie on the Intravirion side of the membrane; it reads MVDNGTRLHDA. Asparagine 417 carries an N-linked (GlcNAc...) asparagine; by host glycan.

Belongs to the influenza type C/coronaviruses hemagglutinin-esterase family. In terms of assembly, homodimer; disulfide-linked. Forms a complex with the M protein in the pre-Golgi. Associates then with S-M complex to form a ternary complex S-M-HE. N-glycosylated in the host RER.

It is found in the virion membrane. Its subcellular location is the host cell membrane. It carries out the reaction N-acetyl-9-O-acetylneuraminate + H2O = N-acetylneuraminate + acetate + H(+). It catalyses the reaction N-acetyl-4-O-acetylneuraminate + H2O = N-acetylneuraminate + acetate + H(+). Its function is as follows. Structural protein that makes short spikes at the surface of the virus. Contains receptor binding and receptor-destroying activities. Mediates de-O-acetylation of N-acetyl-4-O-acetylneuraminic acid, which is probably the receptor determinant recognized by the virus on the surface of erythrocytes and susceptible cells. This receptor-destroying activity is important for virus release as it probably helps preventing self-aggregation and ensures the efficient spread of the progeny virus from cell to cell. May serve as a secondary viral attachment protein for initiating infection, the spike protein being the major one. May become a target for both the humoral and the cellular branches of the immune system. This Bovine coronavirus (strain 98TXSF-110-LUN) (BCoV-LUN) protein is Hemagglutinin-esterase.